Consider the following 161-residue polypeptide: Nucleotide-binding protein Rpic_2826 (161 aa).

The protein belongs to the YajQ family.

Functionally, nucleotide-binding protein. The sequence is that of Nucleotide-binding protein Rpic_2826 from Ralstonia pickettii (strain 12J).